The chain runs to 363 residues: p21-activated protein kinase-interacting protein 1-like (363 aa).

WD repeat units lie at residues 38-75 (AHTASVSVLAVNNRFVATGSRDETIQIYDMKKKVEHGA), 78-116 (HHNGTITCLEFYGNTHLLSGAEDGLICVWNTKKWECQQT), 119-158 (AHKGQVLSLSIHPSGKLALSVGTDKTLRTWNLVEGRSAFI), 200-238 (NNPKRISSAQFITDALIAVAGDEEVIRLYDTASQKCVCE), and 241-282 (AHEN…VQTS). The tract at residues 309–363 (KEKSNTAVTASAVKDCDRPKKKKAQNETTDKEASETQVVHKKRKPETKQKKKKPS) is disordered. Residues 322 to 342 (KDCDRPKKKKAQNETTDKEAS) show a composition bias toward basic and acidic residues. Residues 347–363 (VHKKRKPETKQKKKKPS) show a composition bias toward basic residues.

The protein localises to the nucleus. The protein resides in the nucleolus. Its function is as follows. Negatively regulates the PAK1 kinase. PAK1 is a member of the PAK kinase family, which has been shown to play a positive role in the regulation of signaling pathways involving MAPK8 and RELA. PAK1 exists as an inactive homodimer, which is activated by binding of small GTPases such as CDC42 to an N-terminal regulatory domain. PAK1IP1 also binds to the N-terminus of PAK1, and inhibits the specific activation of PAK1 by CDC42. May be involved in ribosomal large subunit assembly. This chain is p21-activated protein kinase-interacting protein 1-like (pak1ip1), found in Xenopus laevis (African clawed frog).